The sequence spans 376 residues: Beta-centractin (376 aa).

An N-acetylmethionine modification is found at methionine 1. At tyrosine 4 the chain carries 3'-nitrotyrosine.

Belongs to the actin family. ARP1 subfamily.

The protein resides in the cytoplasm. It localises to the cytoskeleton. It is found in the microtubule organizing center. Its subcellular location is the centrosome. Its function is as follows. Component of a multi-subunit complex involved in microtubule based vesicle motility. It is associated with the centrosome. This chain is Beta-centractin (ACTR1B), found in Homo sapiens (Human).